A 346-amino-acid polypeptide reads, in one-letter code: Small ribosomal subunit biogenesis GTPase RsgA (346 aa).

A disordered region spans residues 1–26; sequence MAKRKLTQNQTRRIQSNNAKTLHRHK. Polar residues predominate over residues 7 to 20; the sequence is TQNQTRRIQSNNAK. In terms of domain architecture, CP-type G spans 103-271; sequence ENEISRPDYY…LIDSPGIREF (169 aa). GTP is bound by residues 159 to 162 and 213 to 221; these read NKVD and GQSGVGKSS. Residues cysteine 295, cysteine 300, histidine 302, and cysteine 308 each coordinate Zn(2+).

This sequence belongs to the TRAFAC class YlqF/YawG GTPase family. RsgA subfamily. In terms of assembly, monomer. Associates with 30S ribosomal subunit, binds 16S rRNA. Requires Zn(2+) as cofactor.

It localises to the cytoplasm. Its function is as follows. One of several proteins that assist in the late maturation steps of the functional core of the 30S ribosomal subunit. Helps release RbfA from mature subunits. May play a role in the assembly of ribosomal proteins into the subunit. Circularly permuted GTPase that catalyzes slow GTP hydrolysis, GTPase activity is stimulated by the 30S ribosomal subunit. This is Small ribosomal subunit biogenesis GTPase RsgA from Haemophilus influenzae (strain 86-028NP).